A 370-amino-acid chain; its full sequence is Seipin (370 aa).

The signal sequence occupies residues 1 to 18 (MNILLRLIVFALDPLGLG). Residues 19 to 55 (RRFLIRPAVNLGWNVYDRVRSKADEKVGTVRELVLRL) are Cytoplasmic-facing. The chain crosses the membrane as a helical span at residues 56–76 (GLIAFAVVLIIWLAVFMYAAF). The Lumenal portion of the chain corresponds to 77-251 (YYVYMPAISH…GLRYIMFNWP (175 aa)). A helical transmembrane segment spans residues 252 to 272 (VLSAIVAISTNLFFILVVFLL). At 273–370 (SWYHWSDAKW…RPTKKTTADH (98 aa)) the chain is on the cytoplasmic side. A disordered region spans residues 346-370 (KSRSGKRESPDALRKRPTKKTTADH). Residues 350–359 (GKRESPDALR) are compositionally biased toward basic and acidic residues.

In terms of tissue distribution, widely expressed, with highest levels detected in fat body, moderate levels detected in salivary gland, midgut and muscle, and weak expression detected in brain.

The protein localises to the endoplasmic reticulum membrane. It is found in the lipid droplet. Acts as a tissue-autonomous lipid modulator, preventing ectopic lipid accumulation in salivary gland (a non-adipose tissue) and in promoting lipid storage in fat tissue. Required for the growth and maturation of small nascent lipid droplets (LDs) into larger mature LDs. The sequence is that of Seipin from Drosophila melanogaster (Fruit fly).